A 301-amino-acid polypeptide reads, in one-letter code: Oxaloacetate tautomerase YisK (301 aa).

Position 99 (lysine 99) interacts with oxalate. The Mn(2+) site is built by glutamate 148, glutamate 150, and aspartate 179. Oxalate contacts are provided by lysine 196 and threonine 266.

The protein belongs to the FAH family. In terms of assembly, homodimer. The cofactor is Mg(2+). It depends on Mn(2+) as a cofactor.

The protein resides in the cytoplasm. The catalysed reaction is oxaloacetate = enol-oxaloacetate. It carries out the reaction oxaloacetate + H(+) = pyruvate + CO2. Functionally, tautomerase that converts enol-oxaloacetate to the keto form of oxaloacetate. Also shows weak oxaloacetate decarboxylase (ODx), catalyzing the decarboxylation of oxaloacetate (OAA) to pyruvate and CO(2). In Bacillus subtilis (strain 168), this protein is Oxaloacetate tautomerase YisK.